Reading from the N-terminus, the 345-residue chain is Anthranilate phosphoribosyltransferase (345 aa).

5-phospho-alpha-D-ribose 1-diphosphate contacts are provided by residues Gly-88, Gly-91 to Asp-92, Thr-96, Asn-98 to Thr-101, Lys-116 to Gly-124, and Ser-128. Gly-88 contributes to the anthranilate binding site. Position 100 (Ser-100) interacts with Mg(2+). Position 119 (Asn-119) interacts with anthranilate. Residue Arg-174 participates in anthranilate binding. Positions 233 and 234 each coordinate Mg(2+).

It belongs to the anthranilate phosphoribosyltransferase family. Homodimer. It depends on Mg(2+) as a cofactor.

It catalyses the reaction N-(5-phospho-beta-D-ribosyl)anthranilate + diphosphate = 5-phospho-alpha-D-ribose 1-diphosphate + anthranilate. Its pathway is amino-acid biosynthesis; L-tryptophan biosynthesis; L-tryptophan from chorismate: step 2/5. In terms of biological role, catalyzes the transfer of the phosphoribosyl group of 5-phosphorylribose-1-pyrophosphate (PRPP) to anthranilate to yield N-(5'-phosphoribosyl)-anthranilate (PRA). The chain is Anthranilate phosphoribosyltransferase from Prochlorococcus marinus (strain NATL2A).